We begin with the raw amino-acid sequence, 757 residues long: 5-methyltetrahydropteroyltriglutamate--homocysteine methyltransferase (757 aa).

Residues lysine 18 and asparagine 116 each coordinate 5-methyltetrahydropteroyltri-L-glutamate. 437 to 439 provides a ligand contact to L-homocysteine; the sequence is IGS. Residues 437 to 439 and glutamate 490 contribute to the L-methionine site; that span reads IGS. Residues 521-522 and tryptophan 567 contribute to the 5-methyltetrahydropteroyltri-L-glutamate site; that span reads RC. Residue aspartate 605 participates in L-homocysteine binding. L-methionine is bound at residue aspartate 605. Histidine 647, cysteine 649, histidine 658, aspartate 662, and glutamate 671 together coordinate Zn(2+). Residue histidine 701 is the Proton donor of the active site. Cysteine 733 serves as a coordination point for Zn(2+).

This sequence belongs to the vitamin-B12 independent methionine synthase family. Requires Zn(2+) as cofactor. Expressed in pollen (at protein level).

It carries out the reaction 5-methyltetrahydropteroyltri-L-glutamate + L-homocysteine = tetrahydropteroyltri-L-glutamate + L-methionine. Its pathway is amino-acid biosynthesis; L-methionine biosynthesis via de novo pathway; L-methionine from L-homocysteine (MetE route): step 1/1. Its function is as follows. Catalyzes the transfer of a methyl group from 5-methyltetrahydrofolate to homocysteine resulting in methionine formation. This chain is 5-methyltetrahydropteroyltriglutamate--homocysteine methyltransferase, found in Kali turgidum (Prickly saltwort).